The sequence spans 172 residues: Adenine phosphoribosyltransferase (172 aa).

Belongs to the purine/pyrimidine phosphoribosyltransferase family. Homodimer.

The protein resides in the cytoplasm. It catalyses the reaction AMP + diphosphate = 5-phospho-alpha-D-ribose 1-diphosphate + adenine. Its pathway is purine metabolism; AMP biosynthesis via salvage pathway; AMP from adenine: step 1/1. Catalyzes a salvage reaction resulting in the formation of AMP, that is energically less costly than de novo synthesis. The chain is Adenine phosphoribosyltransferase from Clostridium botulinum (strain Alaska E43 / Type E3).